A 503-amino-acid chain; its full sequence is Puromycin resistance protein pur8 (503 aa).

The Cytoplasmic portion of the chain corresponds to 1–24 (MARKPDISAVPVESAACQGPDPRR). A helical membrane pass occupies residues 25–45 (WWGLVVILAAQLLVVLDGTVV). Residues 46–64 (NIALPSVQRDLGMSDTSRQ) are Extracellular-facing. The chain crosses the membrane as a helical span at residues 65–85 (WVITAYTLAFGGLLLLGGRVA). The Cytoplasmic segment spans residues 86-92 (DAFGRRR). A helical membrane pass occupies residues 93–113 (IFAVGILGFGLASLLGGAAPD). The Extracellular segment spans residues 114-122 (PGTLFLARA). Residues 123–143 (LQGVFAAALAPAALALINTLF) traverse the membrane as a helical segment. Over 144–152 (TEPGERGKA) the chain is Cytoplasmic. A helical transmembrane segment spans residues 153-173 (FGVYGAVSGGGAAVGLLAGGL). Residues 174–181 (LTEYLDWR) lie on the Extracellular side of the membrane. Residues 182–202 (WCLYVNAPVALLALLGCRLLP) form a helical membrane-spanning segment. At 203-212 (RDRRTGRAVR) the chain is on the cytoplasmic side. The helical transmembrane segment at 213 to 233 (LDLPGTLLGCGGLVAIVYAFA) threads the bilayer. Over 234–241 (EAESGWGD) the chain is Extracellular. The helical transmembrane segment at 242-262 (PLVVRLLVLGVLMLVAFALVE) threads the bilayer. The Cytoplasmic segment spans residues 263–280 (RRVQDPLLPPGVVAHRVR). The chain crosses the membrane as a helical span at residues 281-301 (GGSFLVVGLPQIGLFGLFLFL). Topologically, residues 302 to 313 (TYYLQGILDYSP) are extracellular. Residues 314 to 334 (VLTGVAFLPLGLGIAVGSSLI) form a helical membrane-spanning segment. Over 335–346 (AARLLPRTRPRT) the chain is Cytoplasmic. A helical membrane pass occupies residues 347-367 (LIVGALLAAAAGMALLTRLEP). At 368–371 (DTPQ) the chain is on the extracellular side. Residues 372–392 (VYLTHLLPAQILIGLGIGCMM) traverse the membrane as a helical segment. At 393 to 422 (MPAMHTATARVAPHEAGAAAAVVNSAQQVG) the chain is on the cytoplasmic side. Residues 423-443 (GALGVALLNTVSTGATAAYLA) form a helical membrane-spanning segment. Residues 444-461 (DHGTSPAATVDGTVHGYT) lie on the Extracellular side of the membrane. A helical membrane pass occupies residues 462–482 (VAIAFAVGVLLLTAVLAWVLI). The Cytoplasmic segment spans residues 483-503 (DSRTEAADETGSASVTPARPR).

The protein belongs to the major facilitator superfamily. EmrB family.

It localises to the cell membrane. May be involved in active puromycin efflux energized by a proton-dependent electrochemical gradient. In addition, it could be implicated in secreting N-acetylpuromycin, the last intermediate of the puromycin biosynthesis pathway, to the environment. The polypeptide is Puromycin resistance protein pur8 (pur8) (Streptomyces alboniger).